Consider the following 188-residue polypeptide: Elongation factor P (188 aa).

Lysine 34 carries the N6-(3,6-diaminohexanoyl)-5-hydroxylysine modification.

This sequence belongs to the elongation factor P family. Post-translationally, may be beta-lysylated on the epsilon-amino group of Lys-34 by the combined action of EpmA and EpmB, and then hydroxylated on the C5 position of the same residue by EpmC (if this protein is present). Lysylation is critical for the stimulatory effect of EF-P on peptide-bond formation. The lysylation moiety may extend toward the peptidyltransferase center and stabilize the terminal 3-CCA end of the tRNA. Hydroxylation of the C5 position on Lys-34 may allow additional potential stabilizing hydrogen-bond interactions with the P-tRNA.

It is found in the cytoplasm. Its pathway is protein biosynthesis; polypeptide chain elongation. Functionally, involved in peptide bond synthesis. Alleviates ribosome stalling that occurs when 3 or more consecutive Pro residues or the sequence PPG is present in a protein, possibly by augmenting the peptidyl transferase activity of the ribosome. Modification of Lys-34 is required for alleviation. The chain is Elongation factor P from Vibrio parahaemolyticus serotype O3:K6 (strain RIMD 2210633).